Reading from the N-terminus, the 360-residue chain is GTPase Obg (360 aa).

Positions 1-156 (MFVDSVEIII…KCVRLELKLI (156 aa)) constitute an Obg domain. The 204-residue stretch at 157 to 360 (ADIGLVGFPN…LKFVLLKALQ (204 aa)) folds into the OBG-type G domain. GTP-binding positions include 163-170 (GFPNAGKS), 188-192 (FTTLV), 210-213 (DIPG), 279-282 (NKCD), and 341-343 (SAV). The Mg(2+) site is built by Ser170 and Thr190.

The protein belongs to the TRAFAC class OBG-HflX-like GTPase superfamily. OBG GTPase family. As to quaternary structure, monomer. Requires Mg(2+) as cofactor.

Its subcellular location is the cytoplasm. An essential GTPase which binds GTP, GDP and possibly (p)ppGpp with moderate affinity, with high nucleotide exchange rates and a fairly low GTP hydrolysis rate. Plays a role in control of the cell cycle, stress response, ribosome biogenesis and in those bacteria that undergo differentiation, in morphogenesis control. This chain is GTPase Obg, found in Helicobacter pylori (strain P12).